The following is a 388-amino-acid chain: Succinyl-diaminopimelate desuccinylase (388 aa).

His71 serves as a coordination point for Zn(2+). Asp73 is an active-site residue. Residue Asp104 coordinates Zn(2+). Residue Glu143 is the Proton acceptor of the active site. Zn(2+) contacts are provided by Glu144, Glu172, and His361.

It belongs to the peptidase M20A family. DapE subfamily. As to quaternary structure, homodimer. The cofactor is Zn(2+). It depends on Co(2+) as a cofactor.

The catalysed reaction is N-succinyl-(2S,6S)-2,6-diaminopimelate + H2O = (2S,6S)-2,6-diaminopimelate + succinate. Its pathway is amino-acid biosynthesis; L-lysine biosynthesis via DAP pathway; LL-2,6-diaminopimelate from (S)-tetrahydrodipicolinate (succinylase route): step 3/3. Its function is as follows. Catalyzes the hydrolysis of N-succinyl-L,L-diaminopimelic acid (SDAP), forming succinate and LL-2,6-diaminopimelate (DAP), an intermediate involved in the bacterial biosynthesis of lysine and meso-diaminopimelic acid, an essential component of bacterial cell walls. This is Succinyl-diaminopimelate desuccinylase from Bradyrhizobium diazoefficiens (strain JCM 10833 / BCRC 13528 / IAM 13628 / NBRC 14792 / USDA 110).